A 136-amino-acid chain; its full sequence is Histone H2A (136 aa).

The span at 1-11 (MTGGKSAGGKA) shows a compositional bias: gly residues. A disordered region spans residues 1-23 (MTGGKSAGGKAGTTKNAQSRSSK). An N6-acetyllysine mark is found at K5 and K10. At Q107 the chain carries N5-methylglutamine. Position 133 is a phosphoserine (S133). A [ST]-Q motif motif is present at residues 133–134 (SQ).

It belongs to the histone H2A family. In terms of assembly, the nucleosome is a histone octamer containing two molecules each of H2A, H2B, H3 and H4 assembled in one H3-H4 heterotetramer and two H2A-H2B heterodimers. The octamer wraps approximately 147 bp of DNA. In terms of processing, phosphorylated to form H2AS128ph (gamma-H2A) in response to DNA double-strand breaks (DSBs) generated by exogenous genotoxic agents and by stalled replication forks. Phosphorylation is dependent on the DNA damage checkpoint kinases MEC1/ATR and TEL1/ATM, spreads on either side of a detected DSB site and may mark the surrounding chromatin for recruitment of proteins required for DNA damage signaling and repair. Gamma-H2A is removed from the DNA prior to the strand invasion-primer extension step of the repair process and subsequently dephosphorylated. Dephosphorylation is necessary for efficient recovery from the DNA damage checkpoint. Post-translationally, acetylated by ESA1 to form H2AK4ac and H2AK7ac.

The protein localises to the nucleus. The protein resides in the chromosome. Core component of nucleosome which plays a central role in DNA double strand break (DSB) repair. Nucleosomes wrap and compact DNA into chromatin, limiting DNA accessibility to the cellular machineries which require DNA as a template. Histones thereby play a central role in transcription regulation, DNA repair, DNA replication and chromosomal stability. DNA accessibility is regulated via a complex set of post-translational modifications of histones, also called histone code, and nucleosome remodeling. The chain is Histone H2A (hta1) from Botryotinia fuckeliana (strain B05.10) (Noble rot fungus).